Here is a 481-residue protein sequence, read N- to C-terminus: Membrane-bound lytic murein transglycosylase F (481 aa).

The signal sequence occupies residues 1–21 (MKPLKLNYFFIGIITLLLALA). Residues 22-268 (LWPSIPWRSS…RLEEKYLGHV (247 aa)) are non-LT domain. Residues 269–481 (GEFDYVDTTT…PAVPLTKVPE (213 aa)) are LT domain. The active site involves Glu-313.

The protein in the N-terminal section; belongs to the bacterial solute-binding protein 3 family. This sequence in the C-terminal section; belongs to the transglycosylase Slt family.

It localises to the cell outer membrane. The enzyme catalyses Exolytic cleavage of the (1-&gt;4)-beta-glycosidic linkage between N-acetylmuramic acid (MurNAc) and N-acetylglucosamine (GlcNAc) residues in peptidoglycan, from either the reducing or the non-reducing ends of the peptidoglycan chains, with concomitant formation of a 1,6-anhydrobond in the MurNAc residue.. In terms of biological role, murein-degrading enzyme that degrades murein glycan strands and insoluble, high-molecular weight murein sacculi, with the concomitant formation of a 1,6-anhydromuramoyl product. Lytic transglycosylases (LTs) play an integral role in the metabolism of the peptidoglycan (PG) sacculus. Their lytic action creates space within the PG sacculus to allow for its expansion as well as for the insertion of various structures such as secretion systems and flagella. The sequence is that of Membrane-bound lytic murein transglycosylase F from Pectobacterium atrosepticum (strain SCRI 1043 / ATCC BAA-672) (Erwinia carotovora subsp. atroseptica).